Here is a 921-residue protein sequence, read N- to C-terminus: Leucine--tRNA ligase (921 aa).

Residues 80-90 (PYPSGKLHMGH) carry the 'HIGH' region motif. The 'KMSKS' region motif lies at 667–671 (KMSKS). Lys670 provides a ligand contact to ATP.

Belongs to the class-I aminoacyl-tRNA synthetase family.

The protein localises to the cytoplasm. The enzyme catalyses tRNA(Leu) + L-leucine + ATP = L-leucyl-tRNA(Leu) + AMP + diphosphate. The chain is Leucine--tRNA ligase from Psychrobacter arcticus (strain DSM 17307 / VKM B-2377 / 273-4).